The sequence spans 235 residues: Non-structural maintenance of chromosomes element 1 homolog (235 aa).

An RING-type; atypical zinc finger spans residues I181–L225. T185 is subject to Phosphothreonine.

It belongs to the NSE1 family. In terms of assembly, component of the Smc5-Smc6 complex which consists at least of Smc5, Smc6, Nse1, Nse2, Nse4 and MAGE. Nse1, Nse4 and MAGE probably form a subcomplex that bridges the head domains of the Smc5-Smc6 heterodimer. Interacts with MAGE and Nse4.

It is found in the nucleus. The enzyme catalyses S-ubiquitinyl-[E2 ubiquitin-conjugating enzyme]-L-cysteine + [acceptor protein]-L-lysine = [E2 ubiquitin-conjugating enzyme]-L-cysteine + N(6)-ubiquitinyl-[acceptor protein]-L-lysine.. Component of the SMC5-SMC6 complex, a complex involved in repair of DNA double-strand breaks by homologous recombination. The complex may promote sister chromatid homologous recombination by recruiting the SMC1-SMC3 cohesin complex to double-strand breaks. The sequence is that of Non-structural maintenance of chromosomes element 1 homolog from Drosophila melanogaster (Fruit fly).